We begin with the raw amino-acid sequence, 149 residues long: Transcriptional repressor NrdR (149 aa).

A zinc finger lies at 3–34 (CPFCDTEETKVIDSRLVSDGYQVRRRRECGHC). Residues 49-139 (PKIIKTDGTR…VYLSFDDIDQ (91 aa)) enclose the ATP-cone domain.

It belongs to the NrdR family. The cofactor is Zn(2+).

Its function is as follows. Negatively regulates transcription of bacterial ribonucleotide reductase nrd genes and operons by binding to NrdR-boxes. The chain is Transcriptional repressor NrdR from Haemophilus influenzae (strain 86-028NP).